The primary structure comprises 319 residues: Coproporphyrin III ferrochelatase 2 (319 aa).

Fe-coproporphyrin III is bound by residues Tyr-13, Arg-30, 46 to 47 (RY), Ser-54, and Tyr-125. His-181 and Glu-262 together coordinate Fe(2+).

The protein belongs to the ferrochelatase family.

It localises to the cytoplasm. The enzyme catalyses Fe-coproporphyrin III + 2 H(+) = coproporphyrin III + Fe(2+). It participates in porphyrin-containing compound metabolism; protoheme biosynthesis. Functionally, involved in coproporphyrin-dependent heme b biosynthesis. Catalyzes the insertion of ferrous iron into coproporphyrin III to form Fe-coproporphyrin III. In Bacillus anthracis, this protein is Coproporphyrin III ferrochelatase 2.